A 200-amino-acid chain; its full sequence is MKIGIVAYQGSFEEHALQTKRALDNLKIQGDIVAVKKPNDLKDVDAIIIPGGESTTIGVVAQKLGILDELKEKINSGIPTLGTCAGAIILAKDVTDAKVGKKSQPLIGSMDISVIRNYYGRQRESFEATVDLSEIGGGKTRVVFIRAPAIVKTWGDAKPLSKLNDVIIMAMERNMVATTFHPELSSTTVIHEFLIKMAKK.

52–54 (GES) lines the L-glutamine pocket. Residue C84 is the Nucleophile of the active site. L-glutamine is bound by residues R116 and 145 to 146 (IR). Catalysis depends on charge relay system residues H181 and E183.

It belongs to the glutaminase PdxT/SNO family. As to quaternary structure, in the presence of PdxS, forms a dodecamer of heterodimers. Only shows activity in the heterodimer.

The enzyme catalyses aldehydo-D-ribose 5-phosphate + D-glyceraldehyde 3-phosphate + L-glutamine = pyridoxal 5'-phosphate + L-glutamate + phosphate + 3 H2O + H(+). It carries out the reaction L-glutamine + H2O = L-glutamate + NH4(+). The protein operates within cofactor biosynthesis; pyridoxal 5'-phosphate biosynthesis. Its function is as follows. Catalyzes the hydrolysis of glutamine to glutamate and ammonia as part of the biosynthesis of pyridoxal 5'-phosphate. The resulting ammonia molecule is channeled to the active site of PdxS. This chain is Pyridoxal 5'-phosphate synthase subunit PdxT, found in Sulfurisphaera tokodaii (strain DSM 16993 / JCM 10545 / NBRC 100140 / 7) (Sulfolobus tokodaii).